We begin with the raw amino-acid sequence, 291 residues long: MSPATLLRSPREVRELSRRWRGEGAVVGLVPTMGALHEGHLSLVRRAWEECGRVIVSVFVNPTQFGEGEDFERYPRDLEGDRRLLAEAGCDAVFAPAVEDMYGGGTTDLASGERIFVEAGRLGELWEGEERPGHFRGVCTVVAMLFNAAEPHRAYFGEKDYQQLKVIQKMARDLLFGVEIVPCPTVREPDGLALSSRNAYLSPQERRAARALWRALEAAAGEARGGVRDARRLERAMEEVCRAEPLVRLQYAAVVDAETLQRLGELGDRPARALIAARVGETRLIDNAALP.

Residue methionine 33 to histidine 40 participates in ATP binding. Residue histidine 40 is the Proton donor of the active site. Position 64 (glutamine 64) interacts with (R)-pantoate. Position 64 (glutamine 64) interacts with beta-alanine. Glycine 157–aspartate 160 contacts ATP. A (R)-pantoate-binding site is contributed by glutamine 163. ATP-binding positions include valine 186 and leucine 194–arginine 197.

This sequence belongs to the pantothenate synthetase family. As to quaternary structure, homodimer.

The protein localises to the cytoplasm. The enzyme catalyses (R)-pantoate + beta-alanine + ATP = (R)-pantothenate + AMP + diphosphate + H(+). Its pathway is cofactor biosynthesis; (R)-pantothenate biosynthesis; (R)-pantothenate from (R)-pantoate and beta-alanine: step 1/1. Functionally, catalyzes the condensation of pantoate with beta-alanine in an ATP-dependent reaction via a pantoyl-adenylate intermediate. The chain is Pantothenate synthetase from Rubrobacter xylanophilus (strain DSM 9941 / JCM 11954 / NBRC 16129 / PRD-1).